Here is a 153-residue protein sequence, read N- to C-terminus: Pro-corazonin (153 aa).

The signal sequence occupies residues 1 to 20; sequence MLRLLLLPLFLFTLSMACMG. Gln-21 is modified (pyrrolidone carboxylic acid). An Asparagine amide modification is found at Asn-31. Residues 64–153 constitute a propeptide that is removed on maturation; sequence LERCLLQLQH…AVEPNDYGKH (90 aa).

Belongs to the corazonin family. In terms of tissue distribution, expression is restricted to 24 neurons in the larval CNS (8 in the brain and 16 in the ventral nerve cord) and 12-16 neurons in the pars lateralis of the adult brain.

Its subcellular location is the secreted. Cardioactive peptide. Corazonin is probably involved in the physiological regulation of the heart beat. Clock (Clk) and cycle (cyc) proteins negatively regulate Crz transcription in a cell-specific manner. The chain is Pro-corazonin (Crz) from Drosophila virilis (Fruit fly).